The following is a 430-amino-acid chain: Glutamate-1-semialdehyde 2,1-aminomutase (430 aa).

An N6-(pyridoxal phosphate)lysine modification is found at Lys-265.

It belongs to the class-III pyridoxal-phosphate-dependent aminotransferase family. HemL subfamily. As to quaternary structure, homodimer. Pyridoxal 5'-phosphate is required as a cofactor.

It is found in the cytoplasm. It carries out the reaction (S)-4-amino-5-oxopentanoate = 5-aminolevulinate. It participates in porphyrin-containing compound metabolism; protoporphyrin-IX biosynthesis; 5-aminolevulinate from L-glutamyl-tRNA(Glu): step 2/2. This chain is Glutamate-1-semialdehyde 2,1-aminomutase, found in Shewanella oneidensis (strain ATCC 700550 / JCM 31522 / CIP 106686 / LMG 19005 / NCIMB 14063 / MR-1).